Reading from the N-terminus, the 613-residue chain is tRNA (uracil-5-)-methyltransferase homolog A (613 aa).

A disordered region spans residues 1-46; it reads MSEPAAEVPEPMEDCGQDASAVPSSAAPLCQKEEAGPGPAAGPGTQ. The 74-residue stretch at 63 to 136 folds into the RRM domain; it reads FKLELQNVPR…CPLSVRLARP (74 aa). The stretch at 170–200 forms a coiled coil; the sequence is YTEQLEQKRLECERVLQKLAKEIGNTNRALL. Phosphoserine is present on S368. S-adenosyl-L-methionine-binding residues include Q401, E451, and D500. The active-site Nucleophile is C528. Catalysis depends on E571, which acts as the Proton acceptor.

Belongs to the class I-like SAM-binding methyltransferase superfamily. RNA M5U methyltransferase family. Widely expressed at low level. Expressed at higher level in proliferating cells.

It is found in the cytoplasm. The protein localises to the cytosol. It catalyses the reaction uridine(54) in tRNA + S-adenosyl-L-methionine = 5-methyluridine(54) in tRNA + S-adenosyl-L-homocysteine + H(+). The enzyme catalyses a uridine in mRNA + S-adenosyl-L-methionine = a 5-methyluridine in mRNA + S-adenosyl-L-homocysteine + H(+). S-adenosyl-L-methionine-dependent methyltransferase that catalyzes the formation of 5-methyl-uridine in tRNAs and some mRNAs. Mainly catalyzes the methylation of uridine at position 54 (m5U54) in cytosolic tRNAs. Also able to mediate the formation of 5-methyl-uridine in some mRNAs. In Mus musculus (Mouse), this protein is tRNA (uracil-5-)-methyltransferase homolog A.